Reading from the N-terminus, the 78-residue chain is UPF0349 protein SAHV_0934 (78 aa).

The protein belongs to the UPF0349 family.

This Staphylococcus aureus (strain Mu3 / ATCC 700698) protein is UPF0349 protein SAHV_0934.